A 315-amino-acid polypeptide reads, in one-letter code: Probable cell division protein WhiA (315 aa).

Residues 277–311 (SLQELGAMMPSGQISKSGVNHRLRKLNQIAEGYQQ) constitute a DNA-binding region (H-T-H motif).

Belongs to the WhiA family.

Involved in cell division and chromosome segregation. In Lacticaseibacillus casei (strain BL23) (Lactobacillus casei), this protein is Probable cell division protein WhiA.